The chain runs to 433 residues: Pyrimidine-nucleoside phosphorylase (433 aa).

81-83 (KHS) lines the phosphate pocket. K(+)-binding residues include Gly-88 and Thr-90. Phosphate contacts are provided by residues Thr-92, 108 to 110 (KMS), and Thr-120. 2 residues coordinate substrate: Arg-168 and Lys-187. The K(+) site is built by Leu-243, Ala-246, and Glu-255.

It belongs to the thymidine/pyrimidine-nucleoside phosphorylase family. In terms of assembly, homodimer. Requires K(+) as cofactor.

The enzyme catalyses uridine + phosphate = alpha-D-ribose 1-phosphate + uracil. The catalysed reaction is thymidine + phosphate = 2-deoxy-alpha-D-ribose 1-phosphate + thymine. It catalyses the reaction 2'-deoxyuridine + phosphate = 2-deoxy-alpha-D-ribose 1-phosphate + uracil. Its function is as follows. Catalyzes phosphorolysis of the pyrimidine nucleosides uridine, thymidine and 2'-deoxyuridine with the formation of the corresponding pyrimidine base and ribose-1-phosphate. This is Pyrimidine-nucleoside phosphorylase (pdp) from Staphylococcus aureus (strain bovine RF122 / ET3-1).